A 509-amino-acid chain; its full sequence is ATP synthase subunit alpha (509 aa).

169–176 (GDRQTGKT) contacts ATP.

The protein belongs to the ATPase alpha/beta chains family. In terms of assembly, F-type ATPases have 2 components, CF(1) - the catalytic core - and CF(0) - the membrane proton channel. CF(1) has five subunits: alpha(3), beta(3), gamma(1), delta(1), epsilon(1). CF(0) has three main subunits: a(1), b(2) and c(9-12). The alpha and beta chains form an alternating ring which encloses part of the gamma chain. CF(1) is attached to CF(0) by a central stalk formed by the gamma and epsilon chains, while a peripheral stalk is formed by the delta and b chains.

It is found in the cell inner membrane. The catalysed reaction is ATP + H2O + 4 H(+)(in) = ADP + phosphate + 5 H(+)(out). Its function is as follows. Produces ATP from ADP in the presence of a proton gradient across the membrane. The alpha chain is a regulatory subunit. This Xanthobacter autotrophicus (strain ATCC BAA-1158 / Py2) protein is ATP synthase subunit alpha.